The primary structure comprises 37 residues: Large ribosomal subunit protein bL36 (37 aa).

Belongs to the bacterial ribosomal protein bL36 family.

In Ureaplasma parvum serovar 3 (strain ATCC 27815 / 27 / NCTC 11736), this protein is Large ribosomal subunit protein bL36.